We begin with the raw amino-acid sequence, 683 residues long: DNA ligase (683 aa).

Residues 35–39 (DADYD), 84–85 (SL), and E115 each bind NAD(+). K117 acts as the N6-AMP-lysine intermediate in catalysis. NAD(+) contacts are provided by R138, E175, K293, and K317. 4 residues coordinate Zn(2+): C411, C414, C429, and C435. The 86-residue stretch at 598–683 (QTNSAVSGKT…LQNISTGAQQ (86 aa)) folds into the BRCT domain.

Belongs to the NAD-dependent DNA ligase family. LigA subfamily. Mg(2+) is required as a cofactor. The cofactor is Mn(2+).

The catalysed reaction is NAD(+) + (deoxyribonucleotide)n-3'-hydroxyl + 5'-phospho-(deoxyribonucleotide)m = (deoxyribonucleotide)n+m + AMP + beta-nicotinamide D-nucleotide.. DNA ligase that catalyzes the formation of phosphodiester linkages between 5'-phosphoryl and 3'-hydroxyl groups in double-stranded DNA using NAD as a coenzyme and as the energy source for the reaction. It is essential for DNA replication and repair of damaged DNA. The protein is DNA ligase of Nitrosomonas eutropha (strain DSM 101675 / C91 / Nm57).